We begin with the raw amino-acid sequence, 216 residues long: Somatotropin (216 aa).

An N-terminal signal peptide occupies residues M1 to A26. H45 contacts Zn(2+). Residues C78 and C189 are joined by a disulfide bond. The residue at position 131 (S131) is a Phosphoserine. E198 provides a ligand contact to Zn(2+). Residues C206 and C214 are joined by a disulfide bond.

It belongs to the somatotropin/prolactin family.

It localises to the secreted. Functionally, plays an important role in growth control. Its major role in stimulating body growth is to stimulate the liver and other tissues to secrete IGF1. It stimulates both the differentiation and proliferation of myoblasts. It also stimulates amino acid uptake and protein synthesis in muscle and other tissues. This is Somatotropin (GH1) from Oryctolagus cuniculus (Rabbit).